A 357-amino-acid polypeptide reads, in one-letter code: DNA replication and repair protein RecF (357 aa).

ATP is bound at residue 30–37 (GANGSGKT).

It belongs to the RecF family.

The protein localises to the cytoplasm. Functionally, the RecF protein is involved in DNA metabolism; it is required for DNA replication and normal SOS inducibility. RecF binds preferentially to single-stranded, linear DNA. It also seems to bind ATP. The sequence is that of DNA replication and repair protein RecF from Klebsiella pneumoniae subsp. pneumoniae (strain ATCC 700721 / MGH 78578).